Reading from the N-terminus, the 181-residue chain is Major urinary protein 11 (181 aa).

An N-terminal signal peptide occupies residues 1 to 19 (MKMLLLLLCLGLTLVCVHA). Cysteines 83 and 176 form a disulfide.

The protein belongs to the calycin superfamily. Lipocalin family.

It localises to the secreted. In terms of biological role, major urinary proteins (Mups) bind pheromones, and thus stabilize them to allow slow release into the air from urine marks. May protect pheromones from oxidation. May also act as pheromones themselves. In this context, they play a role in the regulation of social behaviors, such as aggression, mating, pup-suckling, territory establishment and dominance. Binds the pheromone analog 2-sec-butyl-4,5-dihydrothiazole (SBT) in vitro. The sequence is that of Major urinary protein 11 from Mus musculus (Mouse).